Reading from the N-terminus, the 357-residue chain is MRRTLKAAILGATGLVGIEYVRMLADHPYIKPTYLAGKGSVGKPYGEIVRWQTVGNVPKEVANQEVKPTDPKLMDDVDIIFSPLPQGAAGPVEEQFAKLGFNVISNSPDHRFDMDVPMIIPEVNPHTVTLIDEQRKRRDWKGFIVTTPLCTAQGAAIPLTPIYQNFKMSGVMITTMQSLSGAGYPGIASLDIVDNALPLGDGYDAKTVKEITRILSEVKRNVQEPGVNEITLDATTHRIATIHGHYEVAYVTFKEDTDVRKVMESMESFKGEPQDLKLPTAPEKPIIVTTQDARPQVFFDRWAGNPPGMSVVVGRLKQVNPRTIRFVSLIHNTVRGAAGGGVLTAELLVEKGYIDKR.

Residue 13 to 16 coordinates NADP(+); it reads TGLV. The Acyl-thioester intermediate role is filled by cysteine 150. Residue 180–181 participates in NADP(+) binding; it reads SG. Residue histidine 245 is the Proton acceptor of the active site. An NADP(+)-binding site is contributed by 332–333; sequence NT.

The protein belongs to the aspartate-semialdehyde dehydrogenase family. In terms of assembly, homotetramer.

It carries out the reaction 3-oxopropanoate + NADP(+) + CoA = malonyl-CoA + NADPH + H(+). Its function is as follows. Catalyzes the reduction of malonyl-CoA to malonate semialdehyde, a key step in the 3-hydroxypropanoate and the 3-hydroxypropanoate/4-hydroxybutyrate cycles. This is Malonyl CoA reductase (NADP) from Metallosphaera sedula (strain ATCC 51363 / DSM 5348 / JCM 9185 / NBRC 15509 / TH2).